Reading from the N-terminus, the 122-residue chain is Large ribosomal subunit protein bL12 (122 aa).

It belongs to the bacterial ribosomal protein bL12 family. As to quaternary structure, homodimer. Part of the ribosomal stalk of the 50S ribosomal subunit. Forms a multimeric L10(L12)X complex, where L10 forms an elongated spine to which 2 to 4 L12 dimers bind in a sequential fashion. Binds GTP-bound translation factors.

Its function is as follows. Forms part of the ribosomal stalk which helps the ribosome interact with GTP-bound translation factors. Is thus essential for accurate translation. The polypeptide is Large ribosomal subunit protein bL12 (Flavobacterium psychrophilum (strain ATCC 49511 / DSM 21280 / CIP 103535 / JIP02/86)).